The primary structure comprises 284 residues: 2-dehydro-3-deoxyphosphooctonate aldolase (284 aa).

Belongs to the KdsA family.

The protein resides in the cytoplasm. It catalyses the reaction D-arabinose 5-phosphate + phosphoenolpyruvate + H2O = 3-deoxy-alpha-D-manno-2-octulosonate-8-phosphate + phosphate. The protein operates within carbohydrate biosynthesis; 3-deoxy-D-manno-octulosonate biosynthesis; 3-deoxy-D-manno-octulosonate from D-ribulose 5-phosphate: step 2/3. It functions in the pathway bacterial outer membrane biogenesis; lipopolysaccharide biosynthesis. This Citrobacter koseri (strain ATCC BAA-895 / CDC 4225-83 / SGSC4696) protein is 2-dehydro-3-deoxyphosphooctonate aldolase.